The chain runs to 168 residues: Bcl2-associated agonist of cell death (168 aa).

Met1 is subject to N-acetylmethionine. The tract at residues 1-105 (MFQIPEFEPS…RSRSAPPNLW (105 aa)) is disordered. Position 25 is a phosphoserine (Ser25). Residues 49-60 (SHQQEQPTSSSH) show a composition bias toward polar residues. Phosphoserine is present on residues Ser75 and Ser91. Asymmetric dimethylarginine; by PRMT1 occurs at positions 94 and 96. Ser97 carries the post-translational modification Phosphoserine. The residue at position 99 (Ser99) is a Phosphoserine; by PKA, PKB, PAK1, RPS6KA1, RPS6KB1 and PKC/PRKCQ. Ser99 carries the phosphoserine; by PKB/AKT1 modification. The short motif at 110–124 (YGRELRRMSDEFVDS) is the BH3 element. 2 positions are modified to phosphoserine: Ser118 and Ser134. The disordered stretch occupies residues 125 to 145 (FKKGLPRPKSAGTATQMRQSS). The segment covering 136 to 145 (GTATQMRQSS) has biased composition (polar residues). Arg161 carries the post-translational modification Omega-N-methylarginine.

Belongs to the Bcl-2 family. In terms of assembly, forms heterodimers with the anti-apoptotic proteins, Bcl-X(L), Bcl-2 and Bcl-W. Also binds protein S100A10. The Ser-75/Ser-99 phosphorylated form binds 14-3-3 proteins. Interacts with AKT1 and PIM3. Interacts (via BH3 domain) with NOL3 (via CARD domain); preventing the association of BAD with BCL2. Interacts with HIF3A (via C-terminus domain); the interaction reduces the binding between BAD and BAX. Interacts with GIMAP3/IAN4 and GIMAP5/IAN5. Phosphorylated on one or more of Ser-75, Ser-99, Ser-118 and Ser-134 in response to survival stimuli, which blocks its pro-apoptotic activity. Phosphorylation on Ser-99 or Ser-75 promotes heterodimerization with 14-3-3 proteins. This interaction then facilitates the phosphorylation at Ser-118, a site within the BH3 motif, leading to the release of Bcl-X(L) and the promotion of cell survival. Ser-99 is the major site of AKT/PKB phosphorylation, Ser-118 the major site of protein kinase A (CAPK) phosphorylation. Phosphorylation at Ser-99 by PKB/AKT1 is almost completely blocked by the apoptotic C-terminus cleavage product of PKN2 generated by caspases-3 activity during apoptosis. Post-translationally, methylation at Arg-94 and Arg-96 by PRMT1 inhibits Akt-mediated phosphorylation at Ser-99. As to expression, expressed in a wide variety of tissues.

Its subcellular location is the mitochondrion outer membrane. The protein resides in the cytoplasm. Functionally, promotes cell death. Successfully competes for the binding to Bcl-X(L), Bcl-2 and Bcl-W, thereby affecting the level of heterodimerization of these proteins with BAX. Can reverse the death repressor activity of Bcl-X(L), but not that of Bcl-2. Appears to act as a link between growth factor receptor signaling and the apoptotic pathways. The polypeptide is Bcl2-associated agonist of cell death (BAD) (Homo sapiens (Human)).